The primary structure comprises 274 residues: Penicillin-insensitive murein endopeptidase (274 aa).

A signal peptide spans 1 to 19; it reads MNKTAIALLALLASSASLA. 3 disulfides stabilise this stretch: Cys44/Cys265, Cys187/Cys235, and Cys216/Cys223. His110, His113, Asp120, Asp147, His150, and His211 together coordinate Zn(2+). The segment at 227–274 is disordered; sequence PLPPPGDGCGAELQSWFEPPKPGTTKPEKKTPPPLPPSCQALLDEHVI.

Belongs to the peptidase M74 family. Dimer. Zn(2+) serves as cofactor.

It is found in the periplasm. Murein endopeptidase that cleaves the D-alanyl-meso-2,6-diamino-pimelyl amide bond that connects peptidoglycan strands. Likely plays a role in the removal of murein from the sacculus. This chain is Penicillin-insensitive murein endopeptidase, found in Escherichia coli (strain ATCC 8739 / DSM 1576 / NBRC 3972 / NCIMB 8545 / WDCM 00012 / Crooks).